The sequence spans 432 residues: Argininosuccinate lyase (432 aa).

Belongs to the lyase 1 family. Argininosuccinate lyase subfamily.

It is found in the cytoplasm. The enzyme catalyses 2-(N(omega)-L-arginino)succinate = fumarate + L-arginine. Its pathway is amino-acid biosynthesis; L-arginine biosynthesis; L-arginine from L-ornithine and carbamoyl phosphate: step 3/3. This Xanthomonas euvesicatoria pv. vesicatoria (strain 85-10) (Xanthomonas campestris pv. vesicatoria) protein is Argininosuccinate lyase.